Reading from the N-terminus, the 923-residue chain is Glucosidase 2 subunit alpha (923 aa).

The first 25 residues, 1–25, serve as a signal peptide directing secretion; it reads MRYHGICWFIFQAAIIFAIFGSCQG. Asparagine 262 carries N-linked (GlcNAc...) asparagine glycosylation. Aspartate 524 acts as the Nucleophile in catalysis. Glutamate 527 is a catalytic residue. N-linked (GlcNAc...) asparagine glycosylation is present at asparagine 563. Aspartate 600 serves as the catalytic Proton donor. Asparagine 822 carries N-linked (GlcNAc...) asparagine glycosylation.

It belongs to the glycosyl hydrolase 31 family. As to quaternary structure, heterodimer of a catalytic subunit alpha (gls2) and a subunit beta (gtb1).

It is found in the endoplasmic reticulum. The catalysed reaction is N(4)-(alpha-D-Glc-(1-&gt;3)-alpha-D-Man-(1-&gt;2)-alpha-D-Man-(1-&gt;2)-alpha-D-Man-(1-&gt;3)-[alpha-D-Man-(1-&gt;2)-alpha-D-Man-(1-&gt;3)-[alpha-D-Man-(1-&gt;2)-alpha-D-Man-(1-&gt;6)]-alpha-D-Man-(1-&gt;6)]-beta-D-Man-(1-&gt;4)-beta-D-GlcNAc-(1-&gt;4)-beta-D-GlcNAc)-L-asparaginyl-[protein] + H2O = N(4)-(alpha-D-Man-(1-&gt;2)-alpha-D-Man-(1-&gt;2)-alpha-D-Man-(1-&gt;3)-[alpha-D-Man-(1-&gt;2)-alpha-D-Man-(1-&gt;3)-[alpha-D-Man-(1-&gt;2)-alpha-D-Man-(1-&gt;6)]-alpha-D-Man-(1-&gt;6)]-beta-D-Man-(1-&gt;4)-beta-D-GlcNAc-(1-&gt;4)-beta-D-GlcNAc)-L-asparaginyl-[protein] (N-glucan mannose isomer 9A1,2,3B1,2,3) + beta-D-glucose. The enzyme catalyses N(4)-(alpha-D-Glc-(1-&gt;3)-alpha-D-Glc-(1-&gt;3)-alpha-D-Man-(1-&gt;2)-alpha-D-Man-(1-&gt;2)-alpha-D-Man-(1-&gt;3)-[alpha-D-Man-(1-&gt;2)-alpha-D-Man-(1-&gt;3)-[alpha-D-Man-(1-&gt;2)-alpha-D-Man-(1-&gt;6)]-alpha-D-Man-(1-&gt;6)]-beta-D-Man-(1-&gt;4)-beta-D-GlcNAc-(1-&gt;4)-beta-D-GlcNAc)-L-asparaginyl-[protein] + H2O = N(4)-(alpha-D-Glc-(1-&gt;3)-alpha-D-Man-(1-&gt;2)-alpha-D-Man-(1-&gt;2)-alpha-D-Man-(1-&gt;3)-[alpha-D-Man-(1-&gt;2)-alpha-D-Man-(1-&gt;3)-[alpha-D-Man-(1-&gt;2)-alpha-D-Man-(1-&gt;6)]-alpha-D-Man-(1-&gt;6)]-beta-D-Man-(1-&gt;4)-beta-D-GlcNAc-(1-&gt;4)-beta-D-GlcNAc)-L-asparaginyl-[protein] + beta-D-glucose. It participates in glycan metabolism; N-glycan metabolism. Catalytic subunit of glucosidase 2, which cleaves sequentially the 2 innermost alpha-1,3-linked glucose residues from the Glc(2)Man(9)GlcNAc(2) oligosaccharide precursor of immature glycoproteins. The protein is Glucosidase 2 subunit alpha of Schizosaccharomyces pombe (strain 972 / ATCC 24843) (Fission yeast).